The chain runs to 527 residues: F-box protein SKIP2 (527 aa).

Residues Asp-39–Ser-85 form the F-box domain.

As to quaternary structure, part of a SCF (ASK-cullin-F-box) protein ligase complex. Interacts with SKP1A/ASK1, SKP1B/ASK2 and ASK11.

Its subcellular location is the nucleus. The protein operates within protein modification; protein ubiquitination. Its function is as follows. Component of SCF(ASK-cullin-F-box) E3 ubiquitin ligase complexes, which may mediate the ubiquitination and subsequent proteasomal degradation of target proteins. This Arabidopsis thaliana (Mouse-ear cress) protein is F-box protein SKIP2 (SKIP2).